Consider the following 218-residue polypeptide: Thiopurine S-methyltransferase (218 aa).

S-adenosyl-L-methionine contacts are provided by Trp-10, Leu-45, Glu-66, and Arg-123.

Belongs to the class I-like SAM-binding methyltransferase superfamily. TPMT family.

The protein localises to the cytoplasm. It carries out the reaction S-adenosyl-L-methionine + a thiopurine = S-adenosyl-L-homocysteine + a thiopurine S-methylether.. This Shewanella putrefaciens (strain CN-32 / ATCC BAA-453) protein is Thiopurine S-methyltransferase.